We begin with the raw amino-acid sequence, 154 residues long: Cyclin-dependent protein kinase inhibitor SMR11 (154 aa).

Positions 1–44 are disordered; it reads MEQEEPCEAKETASSSIEPKTPNPNVPDSIPAIDSDSSLSEEEI. The segment covering 27-38 has biased composition (low complexity); it reads PDSIPAIDSDSS.

As to quaternary structure, interacts with CYCB2-4.

Probable cyclin-dependent protein kinase (CDK) inhibitor that functions as a repressor of mitosis in the endoreduplication cell cycle. This Arabidopsis thaliana (Mouse-ear cress) protein is Cyclin-dependent protein kinase inhibitor SMR11.